A 168-amino-acid chain; its full sequence is uncharacterized protein (168 aa).

2 consecutive transmembrane segments (helical) span residues 41-61 (LLPWKEILVPLSFVMLFLFFI) and 133-153 (KFVISVGDILVFIGVFIFFVL).

Its subcellular location is the cell membrane. This is an uncharacterized protein from Thermotoga maritima (strain ATCC 43589 / DSM 3109 / JCM 10099 / NBRC 100826 / MSB8).